The sequence spans 387 residues: Phosphoglycerate kinase (387 aa).

Substrate is bound by residues 21 to 23 (DLN), arginine 36, 59 to 62 (HLGR), arginine 113, and arginine 146. ATP-binding positions include lysine 197, glutamate 314, and 340–343 (GGDT).

This sequence belongs to the phosphoglycerate kinase family. As to quaternary structure, monomer.

It localises to the cytoplasm. The catalysed reaction is (2R)-3-phosphoglycerate + ATP = (2R)-3-phospho-glyceroyl phosphate + ADP. It participates in carbohydrate degradation; glycolysis; pyruvate from D-glyceraldehyde 3-phosphate: step 2/5. The protein is Phosphoglycerate kinase of Pseudomonas fluorescens (strain SBW25).